The following is a 119-amino-acid chain: Fluoride-specific ion channel FluC (119 aa).

4 consecutive transmembrane segments (helical) span residues 5 to 25, 30 to 50, 59 to 79, and 92 to 112; these read IIPL…LNLA, LSPA…IGIF, WKLL…GFSL, and SALA…WLGL. Glycine 69 and threonine 72 together coordinate Na(+).

Belongs to the fluoride channel Fluc/FEX (TC 1.A.43) family.

The protein localises to the cell inner membrane. It catalyses the reaction fluoride(in) = fluoride(out). With respect to regulation, na(+) is not transported, but it plays an essential structural role and its presence is essential for fluoride channel function. Its function is as follows. Fluoride-specific ion channel. Important for reducing fluoride concentration in the cell, thus reducing its toxicity. This Neisseria meningitidis serogroup A / serotype 4A (strain DSM 15465 / Z2491) protein is Fluoride-specific ion channel FluC.